A 90-amino-acid chain; its full sequence is DNA-directed RNA polymerase subunit omega (90 aa).

It belongs to the RNA polymerase subunit omega family. The RNAP catalytic core consists of 2 alpha, 1 beta, 1 beta' and 1 omega subunit. When a sigma factor is associated with the core the holoenzyme is formed, which can initiate transcription.

The enzyme catalyses RNA(n) + a ribonucleoside 5'-triphosphate = RNA(n+1) + diphosphate. Functionally, promotes RNA polymerase assembly. Latches the N- and C-terminal regions of the beta' subunit thereby facilitating its interaction with the beta and alpha subunits. In Streptomyces coelicolor (strain ATCC BAA-471 / A3(2) / M145), this protein is DNA-directed RNA polymerase subunit omega (rpoZ).